The sequence spans 361 residues: G2/mitotic-specific cyclin-B1 (361 aa).

Positions 1–13 (MLRATNNRRTSNN) are enriched in polar residues. Positions 1–33 (MLRATNNRRTSNNVEKDSLQMAKHGNGPLKPVN) are disordered.

This sequence belongs to the cyclin family. Cyclin AB subfamily. As to quaternary structure, interacts with the CDK1 protein kinase to form a serine/threonine kinase holoenzyme complex also known as maturation promoting factor (MPF). The cyclin subunit imparts substrate specificity to the complex. Interacts with E3 ubiquitin-protein ligase etc-1. Ubiquitinated by etc-1 likely during meiosis, resulting in its degradation.

It is found in the cytoplasm. Its function is as follows. Essential for the control of the cell cycle at the G2/M (mitosis) transition. This is G2/mitotic-specific cyclin-B1 (cyb-1) from Caenorhabditis elegans.